A 227-amino-acid polypeptide reads, in one-letter code: Cytochrome c oxidase subunit 2 (227 aa).

Residues 1-14 (MAHPMQLGFQDAAS) are Mitochondrial intermembrane-facing. Residues 15–45 (PIMEELLYFHDHTLMIVFMISSLVLYIISLM) traverse the membrane as a helical segment. At 46 to 59 (LSTELTHTSTMDAQ) the chain is on the mitochondrial matrix side. A helical transmembrane segment spans residues 60–87 (EVETVWTILPAVILILIALPSLRILYMM). At 88–227 (DEINTPSMTL…YFEEWLLKSL (140 aa)) the chain is on the mitochondrial intermembrane side. Residues His-161, Cys-196, Glu-198, Cys-200, His-204, and Met-207 each coordinate Cu cation. Glu-198 provides a ligand contact to Mg(2+). Tyr-218 is modified (phosphotyrosine).

The protein belongs to the cytochrome c oxidase subunit 2 family. In terms of assembly, component of the cytochrome c oxidase (complex IV, CIV), a multisubunit enzyme composed of 14 subunits. The complex is composed of a catalytic core of 3 subunits MT-CO1, MT-CO2 and MT-CO3, encoded in the mitochondrial DNA, and 11 supernumerary subunits COX4I, COX5A, COX5B, COX6A, COX6B, COX6C, COX7A, COX7B, COX7C, COX8 and NDUFA4, which are encoded in the nuclear genome. The complex exists as a monomer or a dimer and forms supercomplexes (SCs) in the inner mitochondrial membrane with NADH-ubiquinone oxidoreductase (complex I, CI) and ubiquinol-cytochrome c oxidoreductase (cytochrome b-c1 complex, complex III, CIII), resulting in different assemblies (supercomplex SCI(1)III(2)IV(1) and megacomplex MCI(2)III(2)IV(2)). Found in a complex with TMEM177, COA6, COX18, COX20, SCO1 and SCO2. Interacts with TMEM177 in a COX20-dependent manner. Interacts with COX20. Interacts with COX16. The cofactor is Cu cation.

It is found in the mitochondrion inner membrane. It catalyses the reaction 4 Fe(II)-[cytochrome c] + O2 + 8 H(+)(in) = 4 Fe(III)-[cytochrome c] + 2 H2O + 4 H(+)(out). Component of the cytochrome c oxidase, the last enzyme in the mitochondrial electron transport chain which drives oxidative phosphorylation. The respiratory chain contains 3 multisubunit complexes succinate dehydrogenase (complex II, CII), ubiquinol-cytochrome c oxidoreductase (cytochrome b-c1 complex, complex III, CIII) and cytochrome c oxidase (complex IV, CIV), that cooperate to transfer electrons derived from NADH and succinate to molecular oxygen, creating an electrochemical gradient over the inner membrane that drives transmembrane transport and the ATP synthase. Cytochrome c oxidase is the component of the respiratory chain that catalyzes the reduction of oxygen to water. Electrons originating from reduced cytochrome c in the intermembrane space (IMS) are transferred via the dinuclear copper A center (CU(A)) of subunit 2 and heme A of subunit 1 to the active site in subunit 1, a binuclear center (BNC) formed by heme A3 and copper B (CU(B)). The BNC reduces molecular oxygen to 2 water molecules using 4 electrons from cytochrome c in the IMS and 4 protons from the mitochondrial matrix. In Nycticebus coucang (Slow loris), this protein is Cytochrome c oxidase subunit 2 (MT-CO2).